The sequence spans 233 residues: Proteasome subunit beta type-6 (233 aa).

Residues 1-12 (MDLNLDAPHSMG) constitute a propeptide, removed in mature form. Residue T13 is the Nucleophile of the active site.

It belongs to the peptidase T1B family. Component of the 20S core complex of the 26S proteasome. The 26S proteasome is composed of a core protease (CP), known as the 20S proteasome, capped at one or both ends by the 19S regulatory particle (RP/PA700). The 20S proteasome core is composed of 28 subunits that are arranged in four stacked rings, resulting in a barrel-shaped structure. The two end rings are each formed by seven alpha subunits, and the two central rings are each formed by seven beta subunits. The catalytic chamber with the active sites is on the inside of the barrel.

The protein resides in the cytoplasm. It is found in the nucleus. It carries out the reaction Cleavage of peptide bonds with very broad specificity.. The proteasome is a multicatalytic proteinase complex which is characterized by its ability to cleave peptides with Arg, Phe, Tyr, Leu, and Glu adjacent to the leaving group at neutral or slightly basic pH. The proteasome has an ATP-dependent proteolytic activity. The protein is Proteasome subunit beta type-6 (PBA1) of Arabidopsis thaliana (Mouse-ear cress).